Reading from the N-terminus, the 76-residue chain is Putative UPF0377 protein YGL260W (76 aa).

Belongs to the UPF0377 family.

The protein is Putative UPF0377 protein YGL260W of Saccharomyces cerevisiae (strain ATCC 204508 / S288c) (Baker's yeast).